We begin with the raw amino-acid sequence, 285 residues long: Hydrolase in pqqF 5'region (285 aa).

In terms of domain architecture, CN hydrolase spans 22-258; the sequence is MRVALYQCPP…EALIIGTLDR (237 aa). The Proton acceptor role is filled by E60. K131 serves as the catalytic Proton donor. Residue C165 is the Nucleophile of the active site.

It belongs to the carbon-nitrogen hydrolase superfamily. NIT1/NIT2 family.

The chain is Hydrolase in pqqF 5'region from Pseudomonas protegens (strain DSM 19095 / LMG 27888 / CFBP 6595 / CHA0).